A 568-amino-acid chain; its full sequence is Sphingosine-1-phosphate lyase 1 (568 aa).

Residues 1–40 (MPGTDLLKLKDFEPYLEILESYSTKAKNYVNGYCTKYEPW) lie on the Lumenal side of the membrane. A helical; Signal-anchor for type III membrane protein transmembrane segment spans residues 41–61 (QLIAWSVLCTLLIVWVYELIF). Residues 62–568 (QPESLWSRFK…NQMNGSPKPR (507 aa)) lie on the Cytoplasmic side of the membrane. K353 bears the N6-(pyridoxal phosphate)lysine; alternate mark. K353 is modified (N6-acetyllysine; alternate). Residues Y356 and Y366 each carry the 3'-nitrotyrosine modification. S564 carries the phosphoserine modification.

It belongs to the group II decarboxylase family. Sphingosine-1-phosphate lyase subfamily. Pyridoxal 5'-phosphate is required as a cofactor. Highest levels are found in liver, small intestine and thymus, followed by kidney, lung, heart, spleen and brain (at protein level). Also detected in stomach, testis and skeletal muscle (at protein level).

It is found in the endoplasmic reticulum membrane. It carries out the reaction sphinganine 1-phosphate = hexadecanal + phosphoethanolamine. The catalysed reaction is sphing-4-enine 1-phosphate = (2E)-hexadecenal + phosphoethanolamine. Its pathway is lipid metabolism; sphingolipid metabolism. Functionally, cleaves phosphorylated sphingoid bases (PSBs), such as sphingosine-1-phosphate, into fatty aldehydes and phosphoethanolamine. Elevates stress-induced ceramide production and apoptosis. Required for global lipid homeostasis in liver and cholesterol homeostasis in fibroblasts. Involved in the regulation of pro-inflammatory response and neutrophil trafficking. Modulates neuronal autophagy via phosphoethanolamine production which regulates accumulation of aggregate-prone proteins such as APP. Seems to play a role in establishing neuronal contact sites and axonal maintenance. The protein is Sphingosine-1-phosphate lyase 1 of Mus musculus (Mouse).